A 229-amino-acid chain; its full sequence is Transcriptional activator protein IrlR (229 aa).

The region spanning 2–115 is the Response regulatory domain; the sequence is RILIVEDEPK…ELVARVRSIL (114 aa). A 4-aspartylphosphate modification is found at Asp51. Residues 123 to 221 constitute a DNA-binding region (ompR/PhoB-type); it reads STVLRIADLE…VRGMGYVLEV (99 aa).

Post-translationally, phosphorylated by IrlS.

Member of the two-component regulatory system IrlR/IrlS. May be involved in invasion of eukaryotic cells and heavy-metal resistance. This is Transcriptional activator protein IrlR (irlR) from Burkholderia pseudomallei (strain 1026b).